The primary structure comprises 190 residues: Elongation factor P-like protein (190 aa).

It belongs to the elongation factor P family.

This chain is Elongation factor P-like protein, found in Klebsiella pneumoniae (strain 342).